The sequence spans 267 residues: Regulatory protein RecX (267 aa).

This sequence belongs to the RecX family.

It is found in the cytoplasm. In terms of biological role, modulates RecA activity. This is Regulatory protein RecX from Staphylococcus haemolyticus (strain JCSC1435).